The primary structure comprises 370 residues: MAPKLQAQFDAVKVLNDTQSKFEMVQILDENGNVVNEDLVPDLTDEQLVELMERMVWTRILDQRSISLNRQGRLGFYAPTAGQEASQLASQYALEKEDYILPGYRDVPQIIWHGLPLTEAFLFSRGHFKGNQFPEGVNALSPQIIIGAQYIQTAGVAFALKKRGKNAVAITYTGDGGSSQGDFYEGINFAAAYKAPAIFVIQNNNYAISTPRSKQTAAETLAQKAIAVGIPGIQVDGMDALAVYQATKEARDRAVAGEGPTLIETMTYRYGPHTMAGDDPTRYRTSDEDAEWEKKDPLVRFRKFLENKGLWNEDKENEVIERAKADIKAAIKEADNTEKQTVTSLMEIMYEDMPQNLAEQYEIYKEKESK.

Heterodimer of an alpha and a beta chain. Thiamine diphosphate serves as cofactor.

The enzyme catalyses N(6)-[(R)-lipoyl]-L-lysyl-[protein] + pyruvate + H(+) = N(6)-[(R)-S(8)-acetyldihydrolipoyl]-L-lysyl-[protein] + CO2. Its function is as follows. The pyruvate dehydrogenase complex catalyzes the overall conversion of pyruvate to acetyl-CoA and CO(2). It contains multiple copies of three enzymatic components: pyruvate dehydrogenase (E1), dihydrolipoamide acetyltransferase (E2) and lipoamide dehydrogenase (E3). This chain is Pyruvate dehydrogenase E1 component subunit alpha (pdhA), found in Staphylococcus aureus (strain MRSA252).